The sequence spans 176 residues: MDLPGPIHDFLLVFLGSGLLFGSLGVVLFPNPIFSAFSLGFVLVCISLLYILSNSHFVAAAQLLIYVGAITVLIIFAVMFMNDSEYSTDLNRWTVGDGITSVICTTILFSLISTILDTSWYGVIWTTRLNQILEQDLISNSQQIGIHLSTDFFLPFELISIILLVALIGAISVARQ.

5 helical membrane passes run 10-30 (FLLV…VLFP), 32-52 (PIFS…LYIL), 61-81 (AQLL…VMFM), 95-115 (VGDG…ISTI), and 152-172 (FFLP…GAIS).

This sequence belongs to the complex I subunit 6 family. NDH is composed of at least 16 different subunits, 5 of which are encoded in the nucleus.

The protein localises to the plastid. The protein resides in the chloroplast thylakoid membrane. The catalysed reaction is a plastoquinone + NADH + (n+1) H(+)(in) = a plastoquinol + NAD(+) + n H(+)(out). It catalyses the reaction a plastoquinone + NADPH + (n+1) H(+)(in) = a plastoquinol + NADP(+) + n H(+)(out). Its function is as follows. NDH shuttles electrons from NAD(P)H:plastoquinone, via FMN and iron-sulfur (Fe-S) centers, to quinones in the photosynthetic chain and possibly in a chloroplast respiratory chain. The immediate electron acceptor for the enzyme in this species is believed to be plastoquinone. Couples the redox reaction to proton translocation, and thus conserves the redox energy in a proton gradient. The sequence is that of NAD(P)H-quinone oxidoreductase subunit 6, chloroplastic (ndhG) from Aethionema cordifolium (Lebanon stonecress).